Consider the following 178-residue polypeptide: MSRIGNKVIVLPAGVELANNDNVVTVKGSKGELTREFSKDIEIRVEGTEITLHRPNDSKEMKTIHGTTRALLNNMVVGVSEGFKKELEMRGVGYRAQLQGSKLVLAVGKSHPDEVEAPEGITFELPNPTTIVVSGISKEVVGQTAAYVRSLRSPEPYKGKGIRYVGEFVRRKEGKTGK.

Belongs to the universal ribosomal protein uL6 family. As to quaternary structure, part of the 50S ribosomal subunit.

This protein binds to the 23S rRNA, and is important in its secondary structure. It is located near the subunit interface in the base of the L7/L12 stalk, and near the tRNA binding site of the peptidyltransferase center. This is Large ribosomal subunit protein uL6 from Streptococcus pneumoniae serotype 4 (strain ATCC BAA-334 / TIGR4).